We begin with the raw amino-acid sequence, 168 residues long: Envelope glycoprotein L (168 aa).

An N-terminal signal peptide occupies residues 1–22; that stretch reads MMWKWVTLLLFVLVCGDNPVNA. Residues 25–138 form an interaction with gH region; sequence HNPFVCCHQK…TDSSGFKNNL (114 aa).

This sequence belongs to the herpesviridae glycoprotein L family. As to quaternary structure, interacts with glycoprotein H (gH); this interaction is necessary for the correct processing and cell surface expression of gH. The heterodimer gH/gL seems to interact with gB trimers during fusion.

Its subcellular location is the virion membrane. It is found in the host cell membrane. The protein localises to the host Golgi apparatus. The protein resides in the host trans-Golgi network. In terms of biological role, the heterodimer glycoprotein H-glycoprotein L is required for the fusion of viral and plasma membranes leading to virus entry into the host cell. Acts as a functional inhibitor of gH and maintains gH in an inhibited form. Upon binding to host integrins, gL dissociates from gH leading to activation of the viral fusion glycoproteins gB and gH. The chain is Envelope glycoprotein L from Connochaetes taurinus (Blue wildebeest).